A 73-amino-acid polypeptide reads, in one-letter code: MKPINIQDQFLNQIRKDNTFVTVFLLNGFQLRGQVKGFDNFTVLLETEGKQQLIYKHAISTFAPQKNVQLELE.

Residues 8 to 68 enclose the Sm domain; sequence DQFLNQIRKD…ISTFAPQKNV (61 aa).

The protein belongs to the Hfq family. Homohexamer.

In terms of biological role, RNA chaperone that binds small regulatory RNA (sRNAs) and mRNAs to facilitate mRNA translational regulation in response to envelope stress, environmental stress and changes in metabolite concentrations. Also binds with high specificity to tRNAs. The chain is RNA-binding protein Hfq from Bacillus velezensis (strain DSM 23117 / BGSC 10A6 / LMG 26770 / FZB42) (Bacillus amyloliquefaciens subsp. plantarum).